Consider the following 535-residue polypeptide: T-complex protein 1 subunit epsilon (535 aa).

This sequence belongs to the TCP-1 chaperonin family. Heterooligomeric complex of about 850 to 900 kDa that forms two stacked rings, 12 to 16 nm in diameter.

The protein localises to the cytoplasm. Its function is as follows. Molecular chaperone; assists the folding of proteins upon ATP hydrolysis. Known to play a role, in vitro, in the folding of actin and tubulin. The sequence is that of T-complex protein 1 subunit epsilon from Avena sativa (Oat).